A 327-amino-acid chain; its full sequence is Ubiquinone biosynthesis protein COQ4, mitochondrial (327 aa).

Zn(2+)-binding residues include His-208, Asp-209, His-212, and Glu-224.

Belongs to the COQ4 family. In terms of assembly, component of a multi-subunit COQ enzyme complex, composed of at least COQ3, COQ4, COQ5, COQ6, COQ7 and COQ9. Zn(2+) is required as a cofactor.

It is found in the mitochondrion inner membrane. It carries out the reaction a 4-hydroxy-3-methoxy-5-(all-trans-polyprenyl)benzoate + H(+) = a 2-methoxy-6-(all-trans-polyprenyl)phenol + CO2. It functions in the pathway cofactor biosynthesis; ubiquinone biosynthesis. Functionally, lyase that catalyzes the C1-decarboxylation of 4-hydroxy-3-methoxy-5-(all-trans-polyprenyl)benzoic acid into 2-methoxy-6-(all-trans-polyprenyl)phenol during ubiquinone biosynthesis. In Lachancea thermotolerans (strain ATCC 56472 / CBS 6340 / NRRL Y-8284) (Yeast), this protein is Ubiquinone biosynthesis protein COQ4, mitochondrial.